An 84-amino-acid chain; its full sequence is Beta-cardiotoxin CTX9 (84 aa).

A signal peptide spans 1–21 (MKTLLLTLVVVTIVCLDLGYT). 4 disulfide bridges follow: C24-C43, C36-C61, C65-C76, and C77-C82.

It belongs to the three-finger toxin family. Short-chain subfamily. Aminergic toxin sub-subfamily. Expressed by the venom gland.

The protein resides in the secreted. In terms of biological role, acts as a beta-blocker by binding to beta-1 and beta-2 adrenergic receptors (ADRB1 and ADRB2). It dose-dependently decreases the heart rate (bradycardia), whereas conventional cardiotoxins increases it. At 100 mg/kg, intraperitoneal injection into mice provokes labored breathing, impaired locomotion, lack of response to external stimuli, and death (after 30 minutes). This Ophiophagus hannah (King cobra) protein is Beta-cardiotoxin CTX9.